Consider the following 431-residue polypeptide: Histidinol dehydrogenase (431 aa).

Positions 127, 189, and 212 each coordinate NAD(+). Substrate-binding residues include S237, Q259, and H262. Zn(2+)-binding residues include Q259 and H262. Catalysis depends on proton acceptor residues E326 and H327. The substrate site is built by H327, D360, E414, and H419. D360 contacts Zn(2+). H419 contacts Zn(2+).

This sequence belongs to the histidinol dehydrogenase family. Zn(2+) is required as a cofactor.

It catalyses the reaction L-histidinol + 2 NAD(+) + H2O = L-histidine + 2 NADH + 3 H(+). The protein operates within amino-acid biosynthesis; L-histidine biosynthesis; L-histidine from 5-phospho-alpha-D-ribose 1-diphosphate: step 9/9. Its function is as follows. Catalyzes the sequential NAD-dependent oxidations of L-histidinol to L-histidinaldehyde and then to L-histidine. The sequence is that of Histidinol dehydrogenase from Xanthomonas euvesicatoria pv. vesicatoria (strain 85-10) (Xanthomonas campestris pv. vesicatoria).